The following is a 737-amino-acid chain: MAKQVFQTTFAGRELIVETGQVAKQANGSVVVRYGESTVLTAAVMSKKMATGDFFPLQVNYEEKMYAAGKFPGGFMKREGRPSTDATLTARLIDRPIRPMFAEGFRNEVQVINTVLSYDENASAPMAAMFGSSLALSISDIPFDGPIAGVQVGYVDGQIIINPSQEQAEQSLLELTVAGTKHAINMVESGAKELSEEIMLEALLKGHEAVKELIAFQEEIVAAVGKEKAEVELLHVDADLQAEIIAAYNSDLQKAVQVEEKLAREAATQTVKDQVIAVYEEKYADHEEFDRIMRDVAEILEQMEHAEVRRLITEDKVRPDGRKVDEIRPLDAVVDFLPRVHGSGLFTRGQTQALSVLTLAPMGETQIIDGLDPEYKKRFMHHYNFPQYSVGETGRYGAPGRREIGHGALGERALAQVLPSLEEFPYAIRLVAEVLESNGSSSQASICAGTLALMAGGVPIKAPVAGIAMGLISDGNNYTVLTDIQGLEDHFGDMDFKVAGTRDGITALQMDIKIQGITAEILTEALAQAKKARFEILDVIEATIPEVRPELAPTAPKIDTIKIDVDKIKIVIGKGGETIDKIIAETGVKIDIDEEGNVSIYSSDQDAINRAKEIIAGLVREAKVDEVYRAKVVRIEKFGAFVNLFDKTDALVHISEMAWTRTNNVEDLVAIGDEVDVKVIKIDEKGRVDASMKALLPRPPKPERDEKGEKSERPYRPRHHKDHKPKKEITETPKDSE.

Mg(2+)-binding residues include D489 and D495. One can recognise a KH domain in the interval 556-615 (PKIDTIKIDVDKIKIVIGKGGETIDKIIAETGVKIDIDEEGNVSIYSSDQDAINRAKEII). Residues 625–693 (DEVYRAKVVR…EKGRVDASMK (69 aa)) form the S1 motif domain. Residues 691-737 (SMKALLPRPPKPERDEKGEKSERPYRPRHHKDHKPKKEITETPKDSE) form a disordered region. Basic and acidic residues-rich tracts occupy residues 700–715 (PKPE…ERPY) and 725–737 (PKKE…KDSE).

The protein belongs to the polyribonucleotide nucleotidyltransferase family. It depends on Mg(2+) as a cofactor.

It localises to the cytoplasm. It catalyses the reaction RNA(n+1) + phosphate = RNA(n) + a ribonucleoside 5'-diphosphate. In terms of biological role, involved in mRNA degradation. Catalyzes the phosphorolysis of single-stranded polyribonucleotides processively in the 3'- to 5'-direction. The protein is Polyribonucleotide nucleotidyltransferase of Streptococcus pneumoniae (strain Hungary19A-6).